The sequence spans 966 residues: RNA polymerase-associated protein RapA (966 aa).

In terms of domain architecture, Helicase ATP-binding spans 163–337 (EVGRRIAPRV…FARLHLLDPN (175 aa)). 176–183 (DEVGLGKT) serves as a coordination point for ATP. The short motif at 283 to 286 (DEAH) is the DEAH box element. Residues 489–643 (RVDWLINLVK…TCPMGAILHE (155 aa)) enclose the Helicase C-terminal domain.

It belongs to the SNF2/RAD54 helicase family. RapA subfamily. Interacts with the RNAP. Has a higher affinity for the core RNAP than for the holoenzyme. Its ATPase activity is stimulated by binding to RNAP.

In terms of biological role, transcription regulator that activates transcription by stimulating RNA polymerase (RNAP) recycling in case of stress conditions such as supercoiled DNA or high salt concentrations. Probably acts by releasing the RNAP, when it is trapped or immobilized on tightly supercoiled DNA. Does not activate transcription on linear DNA. Probably not involved in DNA repair. In Histophilus somni (strain 129Pt) (Haemophilus somnus), this protein is RNA polymerase-associated protein RapA.